The sequence spans 213 residues: Probable septum site-determining protein MinC (213 aa).

Belongs to the MinC family. In terms of assembly, interacts with MinD and FtsZ.

Cell division inhibitor that blocks the formation of polar Z ring septums. Rapidly oscillates between the poles of the cell to destabilize FtsZ filaments that have formed before they mature into polar Z rings. Prevents FtsZ polymerization. The protein is Probable septum site-determining protein MinC of Clostridium botulinum (strain Eklund 17B / Type B).